Here is a 1328-residue protein sequence, read N- to C-terminus: Mitogen-activated protein kinase kinase kinase 19 (1328 aa).

A compositionally biased stretch (basic and acidic residues) spans 1-19 (MSSMPKPERHAESLLDICH). 4 disordered regions span residues 1 to 28 (MSSMPKPERHAESLLDICHDTNSSPTDL), 44 to 74 (RSEEFDQDGDCSHSTLVNEEEDPSGGRQDWQ), 344 to 380 (VREEDIDCHGSKTRKPEEENSQYLSSRKNESSVAKNY), and 524 to 561 (QENDKHKMNSHRSKLDSKTKTSKKTPQNFVISTEGPIK). A compositionally biased stretch (basic and acidic residues) spans 344-361 (VREEDIDCHGSKTRKPEE). Polar residues predominate over residues 364-377 (SQYLSSRKNESSVA). Positions 524 to 542 (QENDKHKMNSHRSKLDSKT) are enriched in basic and acidic residues. In terms of domain architecture, Protein kinase spans 1061-1324 (WTKGEILGKG…ALQLLKHSFL (264 aa)). Residues 1067–1075 (LGKGAYGTV) and Lys1089 contribute to the ATP site. Asp1186 serves as the catalytic Proton acceptor.

The protein belongs to the protein kinase superfamily. STE Ser/Thr protein kinase family. STE20 subfamily.

The catalysed reaction is L-seryl-[protein] + ATP = O-phospho-L-seryl-[protein] + ADP + H(+). The enzyme catalyses L-threonyl-[protein] + ATP = O-phospho-L-threonyl-[protein] + ADP + H(+). This chain is Mitogen-activated protein kinase kinase kinase 19 (MAP3K19), found in Homo sapiens (Human).